We begin with the raw amino-acid sequence, 276 residues long: Urease accessory protein UreD (276 aa).

This sequence belongs to the UreD family. UreD, UreF and UreG form a complex that acts as a GTP-hydrolysis-dependent molecular chaperone, activating the urease apoprotein by helping to assemble the nickel containing metallocenter of UreC. The UreE protein probably delivers the nickel.

It is found in the cytoplasm. Its function is as follows. Required for maturation of urease via the functional incorporation of the urease nickel metallocenter. In Bradyrhizobium diazoefficiens (strain JCM 10833 / BCRC 13528 / IAM 13628 / NBRC 14792 / USDA 110), this protein is Urease accessory protein UreD.